Reading from the N-terminus, the 188-residue chain is Large ribosomal subunit protein eL18 (188 aa).

A Glycyl lysine isopeptide (Lys-Gly) (interchain with G-Cter in SUMO2) cross-link involves residue lysine 119. Residue serine 130 is modified to Phosphoserine. The interval 150–188 is disordered; it reads RHFGKAPRTPHSHTKPYVRSKGRKFERARGRWASRGYKN. 2 stretches are compositionally biased toward basic residues: residues 151-171 and 179-188; these read HFGK…RSKG and GRWASRGYKN. Threonine 158 is subject to Phosphothreonine. Residue lysine 164 forms a Glycyl lysine isopeptide (Lys-Gly) (interchain with G-Cter in SUMO2) linkage.

This sequence belongs to the eukaryotic ribosomal protein eL18 family. In terms of assembly, component of the large ribosomal subunit.

Its subcellular location is the cytoplasm. The protein localises to the cytosol. The protein resides in the rough endoplasmic reticulum. Its function is as follows. Component of the large ribosomal subunit. The ribosome is a large ribonucleoprotein complex responsible for the synthesis of proteins in the cell. The protein is Large ribosomal subunit protein eL18 (RPL18) of Oryctolagus cuniculus (Rabbit).